The sequence spans 276 residues: Diaminopimelate epimerase (276 aa).

The substrate site is built by asparagine 13, glutamine 46, and asparagine 66. Cysteine 75 serves as the catalytic Proton donor. Substrate-binding positions include glycine 76–asparagine 77, asparagine 159, asparagine 192, and glutamate 210–arginine 211. Cysteine 219 (proton acceptor) is an active-site residue. Glycine 220–serine 221 is a substrate binding site.

It belongs to the diaminopimelate epimerase family. Homodimer.

The protein resides in the cytoplasm. It carries out the reaction (2S,6S)-2,6-diaminopimelate = meso-2,6-diaminopimelate. Its pathway is amino-acid biosynthesis; L-lysine biosynthesis via DAP pathway; DL-2,6-diaminopimelate from LL-2,6-diaminopimelate: step 1/1. Its function is as follows. Catalyzes the stereoinversion of LL-2,6-diaminopimelate (L,L-DAP) to meso-diaminopimelate (meso-DAP), a precursor of L-lysine and an essential component of the bacterial peptidoglycan. The protein is Diaminopimelate epimerase of Pseudoalteromonas atlantica (strain T6c / ATCC BAA-1087).